Here is a 134-residue protein sequence, read N- to C-terminus: Replication enhancer protein (134 aa).

The protein belongs to the geminiviridae replication enhancer protein family. In terms of assembly, homooligomer. Interacts with the replication-associated protein (REP). Interacts with host proliferating cell nuclear antigen (PCNA). Interacts with host retinoblastoma-related protein 1 (RBR1), and may thereby deregulate the host cell cycle. Oligomerization and interaction with PCNA are necessary for optimal replication enhancement.

Functionally, increases viral DNA accumulation. Enhances infectivity and symptom expression. In Cynanchum acutum (Tomato), this protein is Replication enhancer protein.